The sequence spans 165 residues: S-(2-succino)cysteine N-acetyltransferase (165 aa).

An N-acetyltransferase domain is found at 3 to 162 (PRYRLAVERD…ITVYMKKQLR (160 aa)).

Belongs to the acetyltransferase family.

The catalysed reaction is S-(2-succino)-L-cysteine + acetyl-CoA = N-acetyl-S-(2-succino)-L-cysteine + CoA + H(+). It functions in the pathway amino-acid biosynthesis; L-cysteine biosynthesis. In terms of biological role, catalyzes the N-acetylation of S-(2-succino)cysteine. Is involved in a S-(2-succino)cysteine (2SC) degradation pathway that allows B.subtilis to grow on 2SC as a sole sulfur source, via its metabolization to cysteine. Moreover, 2SC is a toxic compound in B.subtilis at high exogenous concentrations, and this enzyme relieves 2SC toxicity via N-acetylation. The sequence is that of S-(2-succino)cysteine N-acetyltransferase from Bacillus subtilis (strain 168).